The following is a 529-amino-acid chain: Bifunctional purine biosynthesis protein PurH (529 aa).

An MGS-like domain is found at 1–148 (MQQRRPIRRA…KNHKDVAIVV (148 aa)). Lysine 287 is modified (N6-acetyllysine).

It belongs to the PurH family.

It carries out the reaction (6R)-10-formyltetrahydrofolate + 5-amino-1-(5-phospho-beta-D-ribosyl)imidazole-4-carboxamide = 5-formamido-1-(5-phospho-D-ribosyl)imidazole-4-carboxamide + (6S)-5,6,7,8-tetrahydrofolate. The enzyme catalyses IMP + H2O = 5-formamido-1-(5-phospho-D-ribosyl)imidazole-4-carboxamide. It functions in the pathway purine metabolism; IMP biosynthesis via de novo pathway; 5-formamido-1-(5-phospho-D-ribosyl)imidazole-4-carboxamide from 5-amino-1-(5-phospho-D-ribosyl)imidazole-4-carboxamide (10-formyl THF route): step 1/1. The protein operates within purine metabolism; IMP biosynthesis via de novo pathway; IMP from 5-formamido-1-(5-phospho-D-ribosyl)imidazole-4-carboxamide: step 1/1. The protein is Bifunctional purine biosynthesis protein PurH of Escherichia coli O139:H28 (strain E24377A / ETEC).